The sequence spans 324 residues: MPRKIWTGSINFGLVTIPVGLYAATEDHSIQFHQYERGTTDRVRMKRVNERTGDEVGYNDIVKGREVGGVLVAVEPSELDEIAPKLSRTIDINTFVDLNAIDPVYFQKTYWLAPGSKEHFRPYNLLRRAMDETNQVGIATFVMRGREYLTAVRAEDSVLALNTMFFADEIRDPGELVGDASSVAKPSDKEIQMATMIIESMSGDWEPEQYEDTYTARVEKLLEDKAEGRAPEVEEAPAEPSDVIDLTEALRRSVDQARRGRGGQVPRQRDEEQDVSALSKAELDKKAKELGIKGRSKMKRADLEAAVAESQGSASGGRRRRRAS.

A Ku domain is found at 10 to 193 (INFGLVTIPV…AKPSDKEIQM (184 aa)). Residues 256–324 (QARRGRGGQV…SGGRRRRRAS (69 aa)) form a disordered region. Over residues 281 to 292 (AELDKKAKELGI) the composition is skewed to basic and acidic residues.

It belongs to the prokaryotic Ku family. In terms of assembly, homodimer. Interacts with LigD.

In terms of biological role, with LigD forms a non-homologous end joining (NHEJ) DNA repair enzyme, which repairs dsDNA breaks with reduced fidelity. Binds linear dsDNA with 5'- and 3'- overhangs but not closed circular dsDNA nor ssDNA. Recruits and stimulates the ligase activity of LigD. In Saccharopolyspora erythraea (strain ATCC 11635 / DSM 40517 / JCM 4748 / NBRC 13426 / NCIMB 8594 / NRRL 2338), this protein is Non-homologous end joining protein Ku 1.